The primary structure comprises 399 residues: Phosphoglycerate kinase (399 aa).

Substrate-binding positions include 22-24, R38, 61-64, R120, and R153; these read DFN and HLGR. ATP is bound by residues K204, E326, and 352–355; that span reads GGDT.

This sequence belongs to the phosphoglycerate kinase family. In terms of assembly, monomer.

It is found in the cytoplasm. It carries out the reaction (2R)-3-phosphoglycerate + ATP = (2R)-3-phospho-glyceroyl phosphate + ADP. It functions in the pathway carbohydrate degradation; glycolysis; pyruvate from D-glyceraldehyde 3-phosphate: step 2/5. This Citrifermentans bemidjiense (strain ATCC BAA-1014 / DSM 16622 / JCM 12645 / Bem) (Geobacter bemidjiensis) protein is Phosphoglycerate kinase.